We begin with the raw amino-acid sequence, 151 residues long: Putative pre-16S rRNA nuclease (151 aa).

Belongs to the YqgF nuclease family.

The protein localises to the cytoplasm. Functionally, could be a nuclease involved in processing of the 5'-end of pre-16S rRNA. In Bifidobacterium adolescentis (strain ATCC 15703 / DSM 20083 / NCTC 11814 / E194a), this protein is Putative pre-16S rRNA nuclease.